A 412-amino-acid chain; its full sequence is Gamma-glutamyl phosphate reductase (412 aa).

The protein belongs to the gamma-glutamyl phosphate reductase family.

It localises to the cytoplasm. It carries out the reaction L-glutamate 5-semialdehyde + phosphate + NADP(+) = L-glutamyl 5-phosphate + NADPH + H(+). It functions in the pathway amino-acid biosynthesis; L-proline biosynthesis; L-glutamate 5-semialdehyde from L-glutamate: step 2/2. Its function is as follows. Catalyzes the NADPH-dependent reduction of L-glutamate 5-phosphate into L-glutamate 5-semialdehyde and phosphate. The product spontaneously undergoes cyclization to form 1-pyrroline-5-carboxylate. In Aliarcobacter butzleri (strain RM4018) (Arcobacter butzleri), this protein is Gamma-glutamyl phosphate reductase.